Reading from the N-terminus, the 133-residue chain is Small ribosomal subunit protein uS8 (133 aa).

Belongs to the universal ribosomal protein uS8 family. As to quaternary structure, part of the 30S ribosomal subunit. Contacts proteins S5 and S12.

One of the primary rRNA binding proteins, it binds directly to 16S rRNA central domain where it helps coordinate assembly of the platform of the 30S subunit. The protein is Small ribosomal subunit protein uS8 of Gloeothece citriformis (strain PCC 7424) (Cyanothece sp. (strain PCC 7424)).